The following is a 2310-amino-acid chain: Peroxide stress-activated histidine kinase mak2 (2310 aa).

The 281-residue stretch at 12–292 folds into the Protein kinase domain; sequence DYAISQLGEF…SATDLCYTIV (281 aa). The 143-residue stretch at 1450 to 1592 folds into the GAF domain; it reads RLGPLLTTVI…LLSQQIAISV (143 aa). A Histidine kinase domain is found at 1760-1986; sequence NMSHELRTPF…TFWFHVQLRN (227 aa). At H1763 the chain carries Phosphohistidine; by autocatalysis. Residues 2180–2303 enclose the Response regulatory domain; it reads YALIAEDNLI…QLVNAVREFV (124 aa). D2232 bears the 4-aspartylphosphate mark.

It localises to the cytoplasm. The enzyme catalyses ATP + protein L-histidine = ADP + protein N-phospho-L-histidine.. Its function is as follows. Involved in the control of the SAPK-dependent transcriptional response to peroxide stress. Regulates sty1 activity. The polypeptide is Peroxide stress-activated histidine kinase mak2 (mak2) (Schizosaccharomyces pombe (strain 972 / ATCC 24843) (Fission yeast)).